The primary structure comprises 128 residues: Neuromedin-S (128 aa).

The N-terminal stretch at 1-27 (MRSEKHLLPLPPLLAICCLGTLHLSSG) is a signal peptide. 2 propeptides span residues 28–72 (FPQS…HEIY) and 75–100 (FLFQ…AEYT). Asn-119 bears the Asparagine amide mark. Residues 123–128 (VSINEH) constitute a propeptide that is removed on maturation.

Belongs to the NmU family. As to expression, expressed by the skin glands.

It is found in the secreted. Neuromedin-S-17: stimulates uterine smooth muscle contraction (B similarity). Synthetic peptide NmS-17 induces calcium mobilization in CHO cells transfected with either human FM-3/GPR66 (EC(50)=0.085 nM) or FM-4/TGR-1 (EC(50)=0.231 nM) NmU/NmS receptors. This Bombina variegata (Yellow-bellied toad) protein is Neuromedin-S (nms).